Consider the following 293-residue polypeptide: 4-hydroxy-tetrahydrodipicolinate synthase (293 aa).

Residue Thr45 coordinates pyruvate. The Proton donor/acceptor role is filled by Tyr133. Lys162 serves as the catalytic Schiff-base intermediate with substrate. Ile204 contributes to the pyruvate binding site.

It belongs to the DapA family. In terms of assembly, homotetramer; dimer of dimers.

Its subcellular location is the cytoplasm. The catalysed reaction is L-aspartate 4-semialdehyde + pyruvate = (2S,4S)-4-hydroxy-2,3,4,5-tetrahydrodipicolinate + H2O + H(+). Its pathway is amino-acid biosynthesis; L-lysine biosynthesis via DAP pathway; (S)-tetrahydrodipicolinate from L-aspartate: step 3/4. Its function is as follows. Catalyzes the condensation of (S)-aspartate-beta-semialdehyde [(S)-ASA] and pyruvate to 4-hydroxy-tetrahydrodipicolinate (HTPA). This chain is 4-hydroxy-tetrahydrodipicolinate synthase, found in Brucella abortus biovar 1 (strain 9-941).